The following is a 552-amino-acid chain: Cytochrome P450 97B1, chloroplastic (552 aa).

The N-terminal 52 residues, 1–52 (MVAAPISTVKLTDANLHTRFHSSSSSTPSTLSLPLSLHFHFSSHSKRFSSIR), are a transit peptide targeting the chloroplast. C528 is a binding site for heme.

It belongs to the cytochrome P450 family. Requires heme as cofactor.

The protein resides in the plastid. The protein localises to the chloroplast membrane. The polypeptide is Cytochrome P450 97B1, chloroplastic (CYP97B1) (Pisum sativum (Garden pea)).